Here is a 143-residue protein sequence, read N- to C-terminus: MLLILNGPNLNRLGLREPGVYGSQTLEDLERQCEAWGAELEMSVTCRQSNYEGQLLEWVQDAEEQGFTGLVINPGALTHYSYALRDAIAGQRLPVVEVHISNVDAREEFRHQSVTAAVCRGKISGLGFSGYRLAMEYLAEVLE.

The Proton acceptor role is filled by tyrosine 21. Substrate contacts are provided by asparagine 73, histidine 79, and aspartate 86. Histidine 99 functions as the Proton donor in the catalytic mechanism. Substrate-binding positions include 100–101 and arginine 110; that span reads IS.

The protein belongs to the type-II 3-dehydroquinase family. As to quaternary structure, homododecamer.

The catalysed reaction is 3-dehydroquinate = 3-dehydroshikimate + H2O. It participates in metabolic intermediate biosynthesis; chorismate biosynthesis; chorismate from D-erythrose 4-phosphate and phosphoenolpyruvate: step 3/7. Its function is as follows. Catalyzes a trans-dehydration via an enolate intermediate. The polypeptide is 3-dehydroquinate dehydratase (Deinococcus radiodurans (strain ATCC 13939 / DSM 20539 / JCM 16871 / CCUG 27074 / LMG 4051 / NBRC 15346 / NCIMB 9279 / VKM B-1422 / R1)).